The primary structure comprises 595 residues: Aspartate--tRNA ligase (595 aa).

Glu173 is a binding site for L-aspartate. The segment at Gln197–Lys200 is aspartate. An L-aspartate-binding site is contributed by Arg219. ATP contacts are provided by residues Arg219–Glu221 and Gln228. His449 contributes to the L-aspartate binding site. Glu483 provides a ligand contact to ATP. L-aspartate is bound at residue Arg490. Position 535 to 538 (Gly535 to Arg538) interacts with ATP.

The protein belongs to the class-II aminoacyl-tRNA synthetase family. Type 1 subfamily. As to quaternary structure, homodimer.

It localises to the cytoplasm. It carries out the reaction tRNA(Asp) + L-aspartate + ATP = L-aspartyl-tRNA(Asp) + AMP + diphosphate. Its function is as follows. Catalyzes the attachment of L-aspartate to tRNA(Asp) in a two-step reaction: L-aspartate is first activated by ATP to form Asp-AMP and then transferred to the acceptor end of tRNA(Asp). This Shewanella sediminis (strain HAW-EB3) protein is Aspartate--tRNA ligase.